Here is a 210-residue protein sequence, read N- to C-terminus: 7-carboxy-7-deazaguanine synthase (210 aa).

Residues Leu-12–Gly-14 and Arg-27 contribute to the substrate site. The 193-residue stretch at Gln-18–Pro-210 folds into the Radical SAM core domain. The [4Fe-4S] cluster site is built by Cys-31, Cys-46, and Cys-49. Residue Thr-51 coordinates Mg(2+). Thr-90 is a binding site for substrate. S-adenosyl-L-methionine contacts are provided by residues Gly-92, Ser-133–Lys-135, and Gln-173–Asp-176. Position 210 (Pro-210) interacts with substrate.

Belongs to the radical SAM superfamily. 7-carboxy-7-deazaguanine synthase family. Homodimer. [4Fe-4S] cluster serves as cofactor. Requires S-adenosyl-L-methionine as cofactor. The cofactor is Mg(2+).

The enzyme catalyses 6-carboxy-5,6,7,8-tetrahydropterin + H(+) = 7-carboxy-7-deazaguanine + NH4(+). Its pathway is purine metabolism; 7-cyano-7-deazaguanine biosynthesis. Functionally, catalyzes the complex heterocyclic radical-mediated conversion of 6-carboxy-5,6,7,8-tetrahydropterin (CPH4) to 7-carboxy-7-deazaguanine (CDG), a step common to the biosynthetic pathways of all 7-deazapurine-containing compounds. This chain is 7-carboxy-7-deazaguanine synthase, found in Bordetella pertussis (strain Tohama I / ATCC BAA-589 / NCTC 13251).